Reading from the N-terminus, the 255-residue chain is Triosephosphate isomerase (255 aa).

Residue 10–12 (NWK) participates in substrate binding. His96 serves as the catalytic Electrophile. Glu168 acts as the Proton acceptor in catalysis. Substrate-binding positions include Gly174, Ser213, and 234–235 (GG).

The protein belongs to the triosephosphate isomerase family. In terms of assembly, homodimer.

It localises to the cytoplasm. It carries out the reaction D-glyceraldehyde 3-phosphate = dihydroxyacetone phosphate. The protein operates within carbohydrate biosynthesis; gluconeogenesis. Its pathway is carbohydrate degradation; glycolysis; D-glyceraldehyde 3-phosphate from glycerone phosphate: step 1/1. Functionally, involved in the gluconeogenesis. Catalyzes stereospecifically the conversion of dihydroxyacetone phosphate (DHAP) to D-glyceraldehyde-3-phosphate (G3P). The chain is Triosephosphate isomerase from Histophilus somni (strain 129Pt) (Haemophilus somnus).